The sequence spans 483 residues: Glutamyl-tRNA(Gln) amidotransferase subunit A (483 aa).

Active-site charge relay system residues include Lys-77 and Ser-152. The Acyl-ester intermediate role is filled by Ser-176.

This sequence belongs to the amidase family. GatA subfamily. Heterotrimer of A, B and C subunits.

The catalysed reaction is L-glutamyl-tRNA(Gln) + L-glutamine + ATP + H2O = L-glutaminyl-tRNA(Gln) + L-glutamate + ADP + phosphate + H(+). Allows the formation of correctly charged Gln-tRNA(Gln) through the transamidation of misacylated Glu-tRNA(Gln) in organisms which lack glutaminyl-tRNA synthetase. The reaction takes place in the presence of glutamine and ATP through an activated gamma-phospho-Glu-tRNA(Gln). This chain is Glutamyl-tRNA(Gln) amidotransferase subunit A, found in Listeria monocytogenes serovar 1/2a (strain ATCC BAA-679 / EGD-e).